Here is a 199-residue protein sequence, read N- to C-terminus: Pyridoxal 5'-phosphate synthase subunit PdxT (199 aa).

An L-glutamine-binding site is contributed by 52–54 (GES). The active-site Nucleophile is the C84. L-glutamine is bound by residues R115 and 143–144 (IR). Active-site charge relay system residues include H179 and E181.

Belongs to the glutaminase PdxT/SNO family. In the presence of PdxS, forms a dodecamer of heterodimers. Only shows activity in the heterodimer.

It carries out the reaction aldehydo-D-ribose 5-phosphate + D-glyceraldehyde 3-phosphate + L-glutamine = pyridoxal 5'-phosphate + L-glutamate + phosphate + 3 H2O + H(+). It catalyses the reaction L-glutamine + H2O = L-glutamate + NH4(+). It participates in cofactor biosynthesis; pyridoxal 5'-phosphate biosynthesis. Functionally, catalyzes the hydrolysis of glutamine to glutamate and ammonia as part of the biosynthesis of pyridoxal 5'-phosphate. The resulting ammonia molecule is channeled to the active site of PdxS. This Methanosarcina acetivorans (strain ATCC 35395 / DSM 2834 / JCM 12185 / C2A) protein is Pyridoxal 5'-phosphate synthase subunit PdxT.